The primary structure comprises 599 residues: Protein linkin (599 aa).

An N-terminal signal peptide occupies residues 1–19 (MKKILPIIWLINLVSGSLS). Over 20–553 (LEKKAPDLLG…SRLYVTPSAL (534 aa)) the chain is Extracellular. N-linked (GlcNAc...) asparagine glycans are attached at residues Asn50, Asn117, Asn163, Asn361, and Asn378. The helical transmembrane segment at 554-574 (IVQSLAVIALVCCMLLMVVVF) threads the bilayer. Residues 575 to 599 (LHYREKKEDRYERQQQSHRFHFDAM) lie on the Cytoplasmic side of the membrane.

This sequence belongs to the TIP family. As to expression, expressed in all somatic gonadal cells including distal tip cells, anchor cell, uterine precursor cells and spermatheca precursor cells of the hermaphrodite. Also expressed in the pharynx, pharyngeal-intestinal valve, intestine, excretory cell and canal, seam cells, a subset of hypodermal cells, vulval precursor cells of the hermaphrodite and hook precursor cells in the male.

It localises to the apical cell membrane. It is found in the lateral cell membrane. Functionally, probable cell adhesion protein involved in gonadal cell migration. The sequence is that of Protein linkin from Caenorhabditis elegans.